Consider the following 397-residue polypeptide: Chorismate synthase (397 aa).

Residues Arg40 and Arg46 each contribute to the NADP(+) site. Residues 129-131, 257-258, Gly302, 317-321, and Arg343 each bind FMN; these read RSS, QA, and KPISS.

The protein belongs to the chorismate synthase family. In terms of assembly, homotetramer. Requires FMNH2 as cofactor.

It carries out the reaction 5-O-(1-carboxyvinyl)-3-phosphoshikimate = chorismate + phosphate. It participates in metabolic intermediate biosynthesis; chorismate biosynthesis; chorismate from D-erythrose 4-phosphate and phosphoenolpyruvate: step 7/7. Its function is as follows. Catalyzes the anti-1,4-elimination of the C-3 phosphate and the C-6 proR hydrogen from 5-enolpyruvylshikimate-3-phosphate (EPSP) to yield chorismate, which is the branch point compound that serves as the starting substrate for the three terminal pathways of aromatic amino acid biosynthesis. This reaction introduces a second double bond into the aromatic ring system. This is Chorismate synthase from Chlorobium limicola (strain DSM 245 / NBRC 103803 / 6330).